We begin with the raw amino-acid sequence, 325 residues long: Glutarate 2-hydroxylase (325 aa).

Positions 160, 162, and 292 each coordinate Fe cation.

Belongs to the glutarate hydroxylase family. As to quaternary structure, homotetramer. Requires Fe(2+) as cofactor.

The enzyme catalyses glutarate + 2-oxoglutarate + O2 = (S)-2-hydroxyglutarate + succinate + CO2. It functions in the pathway amino-acid degradation. Its function is as follows. Acts as an alpha-ketoglutarate-dependent dioxygenase catalyzing hydroxylation of glutarate (GA) to L-2-hydroxyglutarate (L2HG). Functions in a L-lysine degradation pathway that proceeds via cadaverine, glutarate and L-2-hydroxyglutarate. The sequence is that of Glutarate 2-hydroxylase from Pseudomonas putida (strain ATCC 700007 / DSM 6899 / JCM 31910 / BCRC 17059 / LMG 24140 / F1).